The following is a 159-amino-acid chain: Probable epoxidase scpX (159 aa).

Positions 1–25 are cleaved as a signal peptide; that stretch reads MATLIRLLRLLPVASSSAVLMFALD. The next 2 helical transmembrane spans lie at 59 to 79 and 96 to 116; these read WVLI…LFIS and LLFS…IAAI. N-linked (GlcNAc...) asparagine glycans are attached at residues Asn124 and Asn136. The helical transmembrane segment at 139–159 threads the bilayer; sequence RALLTDLPAWLCFIAAALKAL.

It belongs to the epoxidase xenD family.

Its subcellular location is the membrane. The protein operates within mycotoxin biosynthesis. Functionally, probable epoxidase; part of the gene scp cluster that mediates the biosynthesis of a hirsutellone-like compound that has still to be identified. This Mollisia scopiformis (Conifer needle endophyte fungus) protein is Probable epoxidase scpX.